The following is a 373-amino-acid chain: tRNA-specific 2-thiouridylase MnmA (373 aa).

ATP is bound by residues 12–19 (GMSGGVDS) and Met38. The interval 98-100 (NPD) is interaction with target base in tRNA. The active-site Nucleophile is the Cys103. An intrachain disulfide couples Cys103 to Cys200. Gly127 contributes to the ATP binding site. The segment at 150–152 (KDQ) is interaction with tRNA. Residue Cys200 is the Cysteine persulfide intermediate of the active site. Residues 312-313 (RY) are interaction with tRNA.

The protein belongs to the MnmA/TRMU family.

Its subcellular location is the cytoplasm. It catalyses the reaction S-sulfanyl-L-cysteinyl-[protein] + uridine(34) in tRNA + AH2 + ATP = 2-thiouridine(34) in tRNA + L-cysteinyl-[protein] + A + AMP + diphosphate + H(+). Functionally, catalyzes the 2-thiolation of uridine at the wobble position (U34) of tRNA, leading to the formation of s(2)U34. The polypeptide is tRNA-specific 2-thiouridylase MnmA (Streptococcus pyogenes serotype M28 (strain MGAS6180)).